A 229-amino-acid chain; its full sequence is MLFMCHQRVMKKEAEEKLKAEELRRARAAADIPIIWILGGPGCGKGTQCAKIVEKYGFTHLSSGDLLRNEVASGSDKGRQLQAVMASGGLVSNDEVLSLLNDAITRAKGSSKGFLIDGYPRQKNQGIEFEARIAPADLALYFECSEDTMVQRIMARAAASAVKRDDDNEKTIRARLLTFKQNTNAILELYEPKTLTINAERDVDDIFLEVVQAIDCVLKKKQQNAAAQC.

42 to 47 (GCGKGT) provides a ligand contact to ATP. The residue at position 62 (Ser62) is a Phosphoserine. AMP-binding positions include Ser63, Arg68, 118-121 (GYPR), and Gln125. Arg156 is an ATP binding site. AMP-binding residues include Arg164 and Arg175.

This sequence belongs to the adenylate kinase family. AK1 subfamily. As to expression, high expression levels in the thorax, suggesting a possible function in the gastrointestinal or reproductive systems.

The protein localises to the cytoplasm. It catalyses the reaction AMP + ATP = 2 ADP. Catalyzes the reversible transfer of the terminal phosphate group between ATP and AMP. Plays an important role in cellular energy homeostasis and in adenine nucleotide metabolism. The protein is Adenylate kinase 1 of Drosophila melanogaster (Fruit fly).